Reading from the N-terminus, the 1091-residue chain is Sodium/potassium exporting P-type ATPase 1 (1091 aa).

Topologically, residues 1–63 (MGEGTTKENN…LGDDTKIDYK (63 aa)) are cytoplasmic. A helical membrane pass occupies residues 64 to 84 (AMVLHQVCNAMIMVLLISMII). The Extracellular portion of the chain corresponds to 85–90 (SFAMHD). Residues 91–111 (WITGGVISFVIAVNVLIGLVQ) traverse the membrane as a helical segment. Topologically, residues 112–282 (EYKATKTMNS…TNVGTPLHRK (171 aa)) are cytoplasmic. Residues 283–303 (LSKLAVLLFWIAVLFAIIVMA) traverse the membrane as a helical segment. At 304 to 312 (SQKFDVDKR) the chain is on the extracellular side. Residues 313-333 (VAIYAICVALSMIPSSLVVVL) traverse the membrane as a helical segment. Over 334–815 (TITMSVGAAV…RRMTDNIQKF (482 aa)) the chain is Cytoplasmic. The 4-aspartylphosphate intermediate role is filled by aspartate 369. Positions 369 and 371 each coordinate Mg(2+). Residues threonine 371 and glutamate 483 each contribute to the ATP site. The interval 499 to 525 (ALTGEKSTNQSNENDQSSLSQHNEKPG) is disordered. A compositionally biased stretch (polar residues) spans 503–519 (EKSTNQSNENDQSSLSQ). The ATP site is built by lysine 561, arginine 606, threonine 673, glycine 674, aspartate 675, arginine 732, and lysine 738. Mg(2+) is bound at residue aspartate 757. Residue asparagine 760 coordinates ATP. Residues 816-836 (VLQLLAENVAQALYLIIGLVF) traverse the membrane as a helical segment. Over 837–848 (RDENGKSVFPLS) the chain is Extracellular. A helical transmembrane segment spans residues 849 to 869 (PVEVLWIIVVTSCFPAMGLGL). The Cytoplasmic segment spans residues 870 to 885 (EKAAPDLMDRPPHDSE). The helical transmembrane segment at 886–906 (VGIFTWEVIIDTFAYGIIMTG) threads the bilayer. Over 907–943 (SCMASFTGSLYGINSGRLGHDCDGTYNSSCRDVYRSR) the chain is Extracellular. A helical transmembrane segment spans residues 944–964 (SAAFATMTWCALILAWEVVDM). Over 965 to 991 (RRSFFRMHPDTDSPVKEFFRSIWGNQF) the chain is Cytoplasmic. The chain crosses the membrane as a helical span at residues 992-1012 (LFWSIIFGFVSAFPVVYIPVI). Residues 1013–1021 (NDKVFLHKP) are Extracellular-facing. Residues 1022–1042 (IGAEWGLAIAFTIAFWIGAEL) traverse the membrane as a helical segment. At 1043–1091 (YKCGKRRYFKTQRAHNPENDLESNNKRDPFEAYSTSTTIHTEVNIGIKQ) the chain is on the cytoplasmic side.

Belongs to the cation transport ATPase (P-type) (TC 3.A.3) family. Type IID subfamily. Mg(2+) serves as cofactor. Post-translationally, the active site is phosphorylated in presence of sodium or potassium and in conditions of higher pH. Not phosphorylated in presence of calcium ions.

The protein resides in the cell membrane. The catalysed reaction is Na(+)(in) + ATP + H2O = Na(+)(out) + ADP + phosphate + H(+). It catalyses the reaction K(+)(in) + ATP + H2O = K(+)(out) + ADP + phosphate + H(+). Its function is as follows. Catalyzes the hydrolysis of ATP coupled with the export of sodium and potassium from the cell. May export potassium less efficiently. May transport other cations such as lithium. Sodium/potassium efflux ATPases are involved in salt tolerance and maintaining the membrane potential across the plasma membrane in high salinity (Na+) or alkaline (K+) environments. Is negatively modulated by SIS2/HAL3. The protein is Sodium/potassium exporting P-type ATPase 1 of Saccharomyces cerevisiae (strain ATCC 204508 / S288c) (Baker's yeast).